Consider the following 55-residue polypeptide: UPF0391 membrane protein NE1120 (55 aa).

A run of 2 helical transmembrane segments spans residues 4–24 (MALV…AGIA) and 27–47 (LAWA…VFYL).

The protein belongs to the UPF0391 family.

It localises to the cell membrane. The chain is UPF0391 membrane protein NE1120 from Nitrosomonas europaea (strain ATCC 19718 / CIP 103999 / KCTC 2705 / NBRC 14298).